We begin with the raw amino-acid sequence, 311 residues long: Dehydrogenase/reductase SDR family member 7C (311 aa).

The first 18 residues, 1–18 (MGFLTFLIVPLLILGISG), serve as a signal peptide directing secretion. Position 41 to 65 (41 to 65 (VITDAISGLGKECSRVFHSAGARLV)) interacts with NAD(+). Threonine 178 contacts substrate. The active-site Proton acceptor is tyrosine 191.

The protein belongs to the short-chain dehydrogenases/reductases (SDR) family.

The protein localises to the secreted. Putative oxidoreductase. The chain is Dehydrogenase/reductase SDR family member 7C (dhrs7c) from Xenopus tropicalis (Western clawed frog).